A 152-amino-acid chain; its full sequence is ARL14 effector protein-like (152 aa).

A compositionally biased stretch (polar residues) spans 1 to 16 (MTEPSQKNNSTQQELT). The disordered stretch occupies residues 1–27 (MTEPSQKNNSTQQELTNHLFPEKSSQI).

The protein is ARL14 effector protein-like (Arl14epl) of Mus musculus (Mouse).